The chain runs to 83 residues: MKASMYLALAGLVLLFVVGYASESEEKEFPRELLSKIFAVDDFKGKERGCKGFGDSCTPGKNECCPNYACSSKHKWCKVYLGK.

The signal sequence occupies residues 1 to 21; the sequence is MKASMYLALAGLVLLFVVGYA. A propeptide spanning residues 22 to 48 is cleaved from the precursor; that stretch reads SESEEKEFPRELLSKIFAVDDFKGKER. Intrachain disulfides connect Cys50–Cys65, Cys57–Cys70, and Cys64–Cys77. Leucine amide is present on Leu81.

This sequence belongs to the neurotoxin 10 (Hwtx-1) family. 15 (Hntx-3) subfamily. As to quaternary structure, monomer. Expressed by the venom gland.

Its subcellular location is the secreted. Its function is as follows. Selective antagonist of neuronal tetrodotoxin (TTX)-sensitive voltage-gated sodium channels (IC(50)=1270 nM on Nav1.1/SCN1A, 270 nM on Nav1.2/SCN2A, 491 nM on Nav1.3/SCN3A and 232 nM on Nav1.7/SCN9A). This toxin suppress Nav1.7 current amplitude without significantly altering the activation, inactivation, and repriming kinetics. Short extreme depolarizations partially activate the toxin-bound channel, indicating voltage-dependent inhibition of this toxin. This toxin increases the deactivation of the Nav1.7 current after extreme depolarizations. The toxin-Nav1.7 complex is gradually dissociated upon prolonged strong depolarizations in a voltage-dependent manner, and the unbound toxin rebinds to Nav1.7 after a long repolarization. Moreover, analysis of chimeric channels showed that the DIIS3-S4 linker is critical for toxin binding to Nav1.7. These data are consistent with this toxin interacting with Nav1.7 site 4 and trapping the domain II voltage sensor in the closed state. This chain is Hainantoxin-III 4, found in Cyriopagopus hainanus (Chinese bird spider).